A 348-amino-acid chain; its full sequence is Probable dual-specificity RNA methyltransferase RlmN (348 aa).

Catalysis depends on E89, which acts as the Proton acceptor. Residues 95 to 328 (HKNRNTVCVS…VTLRISYGSR (234 aa)) form the Radical SAM core domain. C102 and C333 are oxidised to a cystine. [4Fe-4S] cluster-binding residues include C109, C113, and C116. S-adenosyl-L-methionine is bound by residues 159–160 (GE), S191, 214–216 (SLH), and N290. The active-site S-methylcysteine intermediate is C333.

It belongs to the radical SAM superfamily. RlmN family. [4Fe-4S] cluster serves as cofactor.

Its subcellular location is the cytoplasm. It carries out the reaction adenosine(2503) in 23S rRNA + 2 reduced [2Fe-2S]-[ferredoxin] + 2 S-adenosyl-L-methionine = 2-methyladenosine(2503) in 23S rRNA + 5'-deoxyadenosine + L-methionine + 2 oxidized [2Fe-2S]-[ferredoxin] + S-adenosyl-L-homocysteine. It catalyses the reaction adenosine(37) in tRNA + 2 reduced [2Fe-2S]-[ferredoxin] + 2 S-adenosyl-L-methionine = 2-methyladenosine(37) in tRNA + 5'-deoxyadenosine + L-methionine + 2 oxidized [2Fe-2S]-[ferredoxin] + S-adenosyl-L-homocysteine. Its function is as follows. Specifically methylates position 2 of adenine 2503 in 23S rRNA and position 2 of adenine 37 in tRNAs. This chain is Probable dual-specificity RNA methyltransferase RlmN, found in Dictyoglomus thermophilum (strain ATCC 35947 / DSM 3960 / H-6-12).